The following is a 68-amino-acid chain: MGSFSIWHWLIVLVVVLLLFGRGKIPELMGDVAKGIKNFKKGMTDEEAASADKTIDGKTVEHKSDEVR.

The helical transmembrane segment at 1–21 (MGSFSIWHWLIVLVVVLLLFG) threads the bilayer. The disordered stretch occupies residues 46–68 (EEAASADKTIDGKTVEHKSDEVR). Over residues 53–68 (KTIDGKTVEHKSDEVR) the composition is skewed to basic and acidic residues.

This sequence belongs to the TatA/E family. In terms of assembly, the Tat system comprises two distinct complexes: a TatABC complex, containing multiple copies of TatA, TatB and TatC subunits, and a separate TatA complex, containing only TatA subunits. Substrates initially bind to the TatABC complex, which probably triggers association of the separate TatA complex to form the active translocon.

The protein localises to the cell inner membrane. Functionally, part of the twin-arginine translocation (Tat) system that transports large folded proteins containing a characteristic twin-arginine motif in their signal peptide across membranes. TatA could form the protein-conducting channel of the Tat system. The protein is Sec-independent protein translocase protein TatA of Sinorhizobium fredii (strain NBRC 101917 / NGR234).